The chain runs to 616 residues: Dihydroxy-acid dehydratase (616 aa).

Residue D81 participates in Mg(2+) binding. C122 contributes to the [2Fe-2S] cluster binding site. D123 and K124 together coordinate Mg(2+). An N6-carboxylysine modification is found at K124. C195 is a [2Fe-2S] cluster binding site. E491 is a binding site for Mg(2+). The active-site Proton acceptor is S517.

This sequence belongs to the IlvD/Edd family. Homodimer. [2Fe-2S] cluster is required as a cofactor. It depends on Mg(2+) as a cofactor.

The enzyme catalyses (2R)-2,3-dihydroxy-3-methylbutanoate = 3-methyl-2-oxobutanoate + H2O. It catalyses the reaction (2R,3R)-2,3-dihydroxy-3-methylpentanoate = (S)-3-methyl-2-oxopentanoate + H2O. It functions in the pathway amino-acid biosynthesis; L-isoleucine biosynthesis; L-isoleucine from 2-oxobutanoate: step 3/4. It participates in amino-acid biosynthesis; L-valine biosynthesis; L-valine from pyruvate: step 3/4. Functions in the biosynthesis of branched-chain amino acids. Catalyzes the dehydration of (2R,3R)-2,3-dihydroxy-3-methylpentanoate (2,3-dihydroxy-3-methylvalerate) into 2-oxo-3-methylpentanoate (2-oxo-3-methylvalerate) and of (2R)-2,3-dihydroxy-3-methylbutanoate (2,3-dihydroxyisovalerate) into 2-oxo-3-methylbutanoate (2-oxoisovalerate), the penultimate precursor to L-isoleucine and L-valine, respectively. The polypeptide is Dihydroxy-acid dehydratase (Klebsiella pneumoniae subsp. pneumoniae (strain ATCC 700721 / MGH 78578)).